The chain runs to 111 residues: MKTLLLALVVVAFMCLGSADQLGLGSQRIDWEQGQAIGPPHGLCVQCDRKTCKNCFKSERCQPYNRICYTLYKPDENGEMKWAVKGCAKTCPSAKPGERVKCCSSPRCNEV.

An N-terminal signal peptide occupies residues 1-19 (MKTLLLALVVVAFMCLGSA). Positions 20–34 (DQLGLGSQRIDWEQG) are excised as a propeptide. Pyrrolidone carboxylic acid is present on Gln-35. Cystine bridges form between Cys-44–Cys-68, Cys-47–Cys-55, Cys-61–Cys-87, Cys-91–Cys-102, and Cys-103–Cys-108.

It belongs to the three-finger toxin family. Ancestral subfamily. Boigatoxin sub-subfamily. As to expression, expressed by the venom gland.

It is found in the secreted. In terms of biological role, potent postsynaptic neurotoxin. Displays readily reversible competitive antagonism at the nicotinic acetylcholine receptor (nAChR). This chain is Toxin 3FTx-Tel4, found in Telescopus dhara (Egyptian catsnake).